The following is a 390-amino-acid chain: Digeranylgeranylglycerophospholipid reductase (390 aa).

Residues Ala18, Glu37, Cys48, Ala49, Ala51, Arg98, Val122, Asp278, Gly290, and Ile291 each coordinate FAD. Val368 is an a 2,3-bis-O-(geranylgeranyl)-sn-glycerol 1-phospholipid binding site.

It belongs to the geranylgeranyl reductase family. DGGGPL reductase subfamily. It depends on FAD as a cofactor.

The enzyme catalyses a 2,3-bis-O-phytanyl-sn-glycerol 1-phospholipid + 8 A = a 2,3-bis-O-(geranylgeranyl)-sn-glycerol 1-phospholipid + 8 AH2. The catalysed reaction is 2,3-bis-O-(phytanyl)-sn-glycerol 1-phosphate + 8 A = 2,3-bis-O-(geranylgeranyl)-sn-glycerol 1-phosphate + 8 AH2. It carries out the reaction CDP-2,3-bis-O-(geranylgeranyl)-sn-glycerol + 8 AH2 = CDP-2,3-bis-O-(phytanyl)-sn-glycerol + 8 A. It catalyses the reaction archaetidylserine + 8 AH2 = 2,3-bis-O-phytanyl-sn-glycero-3-phospho-L-serine + 8 A. It participates in membrane lipid metabolism; glycerophospholipid metabolism. Is involved in the reduction of 2,3-digeranylgeranylglycerophospholipids (unsaturated archaeols) into 2,3-diphytanylglycerophospholipids (saturated archaeols) in the biosynthesis of archaeal membrane lipids. Catalyzes the formation of archaetidic acid (2,3-di-O-phytanyl-sn-glyceryl phosphate) from 2,3-di-O-geranylgeranylglyceryl phosphate (DGGGP) via the hydrogenation of each double bond of the isoprenoid chains. Is also probably able to reduce double bonds of geranyl groups in CDP-2,3-bis-O-(geranylgeranyl)-sn-glycerol and archaetidylserine, thus acting at various stages in the biosynthesis of archaeal membrane lipids. In Methanococcus vannielii (strain ATCC 35089 / DSM 1224 / JCM 13029 / OCM 148 / SB), this protein is Digeranylgeranylglycerophospholipid reductase.